Reading from the N-terminus, the 588-residue chain is Urease subunit alpha (588 aa).

Residues 149 to 588 (GGIDTHIHFI…LPMAQRYFLF (440 aa)) form the Urease domain. Residues His-154, His-156, and Lys-237 each contribute to the Ni(2+) site. At Lys-237 the chain carries N6-carboxylysine. His-239 provides a ligand contact to substrate. 2 residues coordinate Ni(2+): His-266 and His-292. His-340 serves as the catalytic Proton donor. Position 380 (Asp-380) interacts with Ni(2+).

The protein belongs to the metallo-dependent hydrolases superfamily. Urease alpha subunit family. As to quaternary structure, heterotrimer of UreA (gamma), UreB (beta) and UreC (alpha) subunits. Three heterotrimers associate to form the active enzyme. The cofactor is Ni cation. Carboxylation allows a single lysine to coordinate two nickel ions.

Its subcellular location is the cytoplasm. It carries out the reaction urea + 2 H2O + H(+) = hydrogencarbonate + 2 NH4(+). It functions in the pathway nitrogen metabolism; urea degradation; CO(2) and NH(3) from urea (urease route): step 1/1. The chain is Urease subunit alpha from Opitutus terrae (strain DSM 11246 / JCM 15787 / PB90-1).